Consider the following 664-residue polypeptide: Macoilin (664 aa).

The next 4 helical transmembrane spans lie at 28 to 48 (TFLY…DFVV), 75 to 95 (AFSV…LLFI), 120 to 140 (VCLP…AIRF), and 154 to 174 (FAAH…KSYV). Positions 253–265 (REKGKEKDKDAKK) are enriched in basic and acidic residues. The segment at 253 to 274 (REKGKEKDKDAKKHNLGINNNN) is disordered. Ser305 carries the phosphoserine modification. Residues 320–348 (KNYKNASGVVNSSPRSHSATNGSIPSSSS) show a composition bias toward polar residues. Residues 320 to 375 (KNYKNASGVVNSSPRSHSATNGSIPSSSSKNEKKQKCTSKSPSTHKDLMENCIPNN) form a disordered region. The N-linked (GlcNAc...) asparagine glycan is linked to Asn324. The residue at position 332 (Ser332) is a Phosphoserine. N-linked (GlcNAc...) asparagine glycans are attached at residues Asn340 and Asn452. The segment at 630–664 (TSPLSPVSPHYSSKFVETSPSGLDPNASVYQPLKK) is disordered. 2 positions are modified to phosphoserine: Ser631 and Ser634. The N-linked (GlcNAc...) asparagine glycan is linked to Asn655.

The protein belongs to the macoilin family.

It localises to the rough endoplasmic reticulum membrane. It is found in the nucleus membrane. In terms of biological role, plays a role in the regulation of neuronal activity. This is Macoilin (MACO1) from Pan troglodytes (Chimpanzee).